Consider the following 178-residue polypeptide: SCAN domain-containing protein 1 (178 aa).

The tract at residues 1 to 107 (MAATEQSLAP…GSRPGPETFR (107 aa)) is disordered. Residues 9–18 (APAGSSAPPS) show a composition bias toward low complexity. Residues 36 to 54 (GSSSTPEAPSIPDSSNPSA) are compositionally biased toward polar residues. One can recognise an SCAN box domain in the interval 107-178 (RQRFRQFRYQ…RRRTDVRITG (72 aa)).

In terms of assembly, interacts with ZNF202.

Its subcellular location is the nucleus. May regulate transcriptional activity. The chain is SCAN domain-containing protein 1 (SCAND1) from Bos taurus (Bovine).